Reading from the N-terminus, the 270-residue chain is MPAPRGLLRATFLVLVAFGLLLHIDFSDATNMTSSTNVPTSTSSRNTVESTTSSEPTTETNMTTARESSVHDARNDEIMKVLAILFYIVTGTSIFSFIAVLIAVVYSSCCKHPGRFRFADEEAVNLLDDTDDSGGSSPFGSGSRRGSQIPAGFCSSSPYQRLETRDWDEEEEASAARERMKHDPENVIYFRKDGNLDTSFVNPNYGRGSPLTIESHLSDNEEDPIRYYVSVYDELTASEMEEPSNSTSWQIPKLMKVAMQPVSLRDPEYD.

The signal sequence occupies residues 1–29 (MPAPRGLLRATFLVLVAFGLLLHIDFSDA). 2 N-linked (GlcNAc...) asparagine; by host glycosylation sites follow: Asn31 and Asn61. Over residues 33-67 (TSSTNVPTSTSSRNTVESTTSSEPTTETNMTTARE) the composition is skewed to low complexity. The disordered stretch occupies residues 33 to 70 (TSSTNVPTSTSSRNTVESTTSSEPTTETNMTTARESSV). Residues 84–104 (ILFYIVTGTSIFSFIAVLIAV) traverse the membrane as a helical segment. Positions 129 to 179 (DTDDSGGSSPFGSGSRRGSQIPAGFCSSSPYQRLETRDWDEEEEASAARER) are disordered. A compositionally biased stretch (low complexity) spans 133-147 (SGGSSPFGSGSRRGS). The N-linked (GlcNAc...) asparagine; by host glycan is linked to Asn245.

The protein belongs to the HHV-5 UL132 family.

The protein localises to the virion membrane. In Homo sapiens (Human), this protein is Envelope glycoprotein UL132 (UL132).